Reading from the N-terminus, the 296-residue chain is Glycine N-acyltransferase-like protein (296 aa).

Position 41 is an N6-acetyllysine; alternate (lysine 41). At lysine 41 the chain carries N6-succinyllysine; alternate. An N6-acetyllysine modification is found at lysine 43. An N6-acetyllysine; alternate modification is found at lysine 48. Lysine 48 carries the N6-succinyllysine; alternate modification. Residues lysine 80 and lysine 83 each carry the N6-acetyllysine modification. Lysine 183 and lysine 256 each carry N6-acetyllysine; alternate. An N6-succinyllysine; alternate mark is found at lysine 183 and lysine 256.

Belongs to the glycine N-acyltransferase family.

The protein localises to the mitochondrion. The catalysed reaction is an acyl-CoA + glycine = an N-acylglycine + CoA + H(+). Mitochondrial acyltransferase which transfers the acyl group to the N-terminus of glycine. Can conjugate a multitude of substrates to form a variety of N-acylglycines. This chain is Glycine N-acyltransferase-like protein (Gm4952), found in Mus musculus (Mouse).